An 864-amino-acid polypeptide reads, in one-letter code: MEPGTIPSPVSAPVAAPVTPSAVAAPVQVVSPAAVAPAPAAPIAVTPVAPPPTLASVQPATVTIPAPAPIAAASVAPVASVAPPVVAAPTPPAASPVSTPPVAVAQIPVAVSAPVAPPVAATPTPVAPIPVAAPVIATPPVAASAPTPAAVTPVVSPVIATPPVVPANTTVPVAAPVAAVPAAVPVVAPVLAPAVAPAVAPVVAETPAPPPVAEIPVATIPECVAPLIPEVSVVATKPLAAAEPVVVAPPATETPVVAPAAASPHVSVAPAVETAVVAPVSASTEPPVAAATLTTAPETPALAPVVAESQVAANTVVATPPTPAPEPETIAPPVVAETPEVASVAVAETTPPVVPPVAAESIPAPVVATTPVPATLAVTDPDVTASAVPELPPVIAPSPVPSAVAETPVDLAPPVLPPVAAEPVPAVVAEETPETPAPASAPVTIAALDIPEVAPVIAAPSDAPAEAPSAAAPIVSTPPTTASVPETTAPPAAVPTEPIDVSVLSEAAIETPVAPPVEVTTEVAVADVAPPEAAADLIIEPVEPPAPIPDLLEQTTSVPAVEAAESTSSPIPETSLPPPNEAVASPEVAVAPITAPEPIPEPEPSLATPTEPIPVEAPVVIQEAVDAVEVPVTETSTSIPETTVEYPVAEKVLDPAITEAPVTTQEPDVANINDGAPATEITTPAVEIVTAAAEVSDTAIPLIDPPVPQEIAVAEIPETETKPAEVIVEQSTIPIEAPVPEVSKYAEPVISEAPAAEVPITAGDNPDNTSVGISEVVPTIAEKAVEEVPTSEIPEQSSSPSDSVPVAKITPLLRDLQTTDVSLLAIAATLDAIGEKLKDQKARNQQVMDRLCEIEKILGPPKSN.

A leucine-zipper region spans residues 816–858 (LQTTDVSLLAIAATLDAIGEKLKDQKARNQQVMDRLCEIEKIL).

Homodimer. As to expression, soma and axons of photoreceptor cells of compound eyes and ocelli.

The protein resides in the cytoplasm. Plays important roles in both rhabdomere development and in photoreceptor cell survival. Might function as a calcium-sequestering 'sponge' to regulate the amount of free cytoplasmic calcium. It binds 0.3 mole of Ca(2+) per mole of protein. This is Calphotin (Cpn) from Drosophila melanogaster (Fruit fly).